A 173-amino-acid chain; its full sequence is Ribosome maturation factor RimM (173 aa).

The PRC barrel domain maps to 95–173; that stretch reads EGEYYWRQLE…LMVVDWDPDF (79 aa).

The protein belongs to the RimM family. In terms of assembly, binds ribosomal protein uS19.

Its subcellular location is the cytoplasm. Its function is as follows. An accessory protein needed during the final step in the assembly of 30S ribosomal subunit, possibly for assembly of the head region. Essential for efficient processing of 16S rRNA. May be needed both before and after RbfA during the maturation of 16S rRNA. It has affinity for free ribosomal 30S subunits but not for 70S ribosomes. The polypeptide is Ribosome maturation factor RimM (Hahella chejuensis (strain KCTC 2396)).